A 250-amino-acid chain; its full sequence is MIDLNADLGEGFGRWTLTDDDALLSVVTSANVACGFHAGDPSVMRRVCDLAAERGVRIGAQVSYRDLAGFGRRAMDVPSDELAAEVAYQIGALRVFAEAAGAPVAYVKPHGALYNRTVHDEGQARAVVAGVRLAGGALPVLGLPGSRLLTAAAEAGLTGVPEAFADRAYTAEGSLVPRSEAGSVVTDEDAVVRRALAFAVEGSVEAVDGTAVAVAARSLCVHGDTPNAARIAARVREALETAGVGIGAFA.

This sequence belongs to the LamB/PxpA family. In terms of assembly, forms a complex composed of PxpA, PxpB and PxpC.

It catalyses the reaction 5-oxo-L-proline + ATP + 2 H2O = L-glutamate + ADP + phosphate + H(+). Its function is as follows. Catalyzes the cleavage of 5-oxoproline to form L-glutamate coupled to the hydrolysis of ATP to ADP and inorganic phosphate. This chain is 5-oxoprolinase subunit A, found in Streptomyces coelicolor (strain ATCC BAA-471 / A3(2) / M145).